A 165-amino-acid polypeptide reads, in one-letter code: Regulator of ribonuclease activity A (165 aa).

Belongs to the RraA family. As to quaternary structure, homotrimer. Binds to both RNA-binding sites in the C-terminal region of Rne and to RhlB.

Its subcellular location is the cytoplasm. In terms of biological role, globally modulates RNA abundance by binding to RNase E (Rne) and regulating its endonucleolytic activity. Can modulate Rne action in a substrate-dependent manner by altering the composition of the degradosome. Modulates RNA-binding and helicase activities of the degradosome. This Actinobacillus pleuropneumoniae serotype 7 (strain AP76) protein is Regulator of ribonuclease activity A.